The primary structure comprises 396 residues: Putative nickel insertion protein (396 aa).

Belongs to the LarC family.

The polypeptide is Putative nickel insertion protein (Methanococcoides burtonii (strain DSM 6242 / NBRC 107633 / OCM 468 / ACE-M)).